We begin with the raw amino-acid sequence, 153 residues long: Small ribosomal subunit protein uS13 (153 aa).

It belongs to the universal ribosomal protein uS13 family. In terms of assembly, part of the 30S ribosomal subunit. Forms a loose heterodimer with protein S19. Forms two bridges to the 50S subunit in the 70S ribosome.

Functionally, located at the top of the head of the 30S subunit, it contacts several helices of the 16S rRNA. In the 70S ribosome it contacts the 23S rRNA (bridge B1a) and protein L5 of the 50S subunit (bridge B1b), connecting the 2 subunits; these bridges are implicated in subunit movement. The polypeptide is Small ribosomal subunit protein uS13 (Pyrobaculum calidifontis (strain DSM 21063 / JCM 11548 / VA1)).